The sequence spans 370 residues: Cytochrome b (370 aa).

The next 4 membrane-spanning stretches (helical) occupy residues 25–45 (FGSMLLTCMALQTSTGFFLAI), 69–90 (WIMQNLHAIGASLFFICIYTHI), 105–125 (WLSGTILLIILMATAFFGYVL), and 170–190 (FFALHFILPFLIISLSSIHIV). Heme b contacts are provided by His-75 and His-89. Heme b-binding residues include His-174 and His-188. Residue His-193 coordinates a ubiquinone. The next 4 membrane-spanning stretches (helical) occupy residues 218 to 238 (YKDMLMATTMITMLFITMSFM), 280 to 300 (LGGTLALLMSVIILTAPPFTH), 312 to 332 (LTQILFWMLIATFITITWTAT), and 339 to 358 (FITISQMASTXYFLFFIINP).

This sequence belongs to the cytochrome b family. In terms of assembly, the cytochrome bc1 complex contains 3 respiratory subunits (MT-CYB, CYC1 and UQCRFS1), 2 core proteins (UQCRC1 and UQCRC2) and probably 6 low-molecular weight proteins. Heme b is required as a cofactor.

The protein localises to the mitochondrion inner membrane. In terms of biological role, component of the ubiquinol-cytochrome c reductase complex (complex III or cytochrome b-c1 complex) that is part of the mitochondrial respiratory chain. The b-c1 complex mediates electron transfer from ubiquinol to cytochrome c. Contributes to the generation of a proton gradient across the mitochondrial membrane that is then used for ATP synthesis. The protein is Cytochrome b (MT-CYB) of Micropechis ikaheca (New Guinean small-eyed snake).